A 124-amino-acid polypeptide reads, in one-letter code: UPF0231 protein Sbal223_3655 (124 aa).

This sequence belongs to the UPF0231 family.

The polypeptide is UPF0231 protein Sbal223_3655 (Shewanella baltica (strain OS223)).